Reading from the N-terminus, the 658-residue chain is Sodium/nucleoside cotransporter 1 (658 aa).

At 1 to 75 (MEKASGRKSL…ARTFCQRHAS (75 aa)) the chain is on the cytoplasmic side. A helical membrane pass occupies residues 76–99 (LFKKILLGLLCLAYAAYFLAACIL). Residues 100 to 104 (DFQRA) lie on the Extracellular side of the membrane. A helical transmembrane segment spans residues 105–123 (LALFVITCLVILVLLLHFL). At 124–142 (KKFLGKKLTRCLKPFKNSQ) the chain is on the cytoplasmic side. The helical transmembrane segment at 143-162 (LRLWIKRVFAGVSLVGLILW) threads the bilayer. At 163-173 (LALDTAQRPEQ) the chain is on the extracellular side. A helical transmembrane segment spans residues 174–190 (LISFAGICMFVLILFAC). Over 191-196 (SKHHSA) the chain is Cytoplasmic. The helical transmembrane segment at 197–217 (VSWRTVFWGLGLQFVFGLLVI) threads the bilayer. Topologically, residues 218–256 (RTDPGFIAFQWLGDQVQIFLAYTVAGSSFVLGDTLVNDV) are extracellular. The helical transmembrane segment at 257-278 (FAFQSLPIIIFFGCVMSILYYL) threads the bilayer. Over 279 to 289 (GLVQWVVQKIA) the chain is Cytoplasmic. The helical transmembrane segment at 290-313 (WFLQVTMRTTATETLAVAGNIFVG) threads the bilayer. The Extracellular portion of the chain corresponds to 314–332 (MTEAPLLIRPYLADLTLSE). The chain crosses the membrane as a helical span at residues 333-355 (IHAVMTSGFATISGTVLGAFISF). Topologically, residues 356–361 (GIDASS) are cytoplasmic. The chain crosses the membrane as a helical span at residues 362–381 (LISASVMGAPCALALSKLVY). Residues 382-418 (PEEEESKFKSKEGVKLPRGKESNVLEAASNGATDAIA) lie on the Extracellular side of the membrane. A helical membrane pass occupies residues 419–441 (LVANVAANLVAFLAVLAFINAAL). Residues 442 to 452 (SWLGELVDIQG) are Cytoplasmic-facing. Residues 453–474 (LTFQVICSYILRPMVYMMGVEW) form a helical membrane-spanning segment. The Extracellular segment spans residues 475–529 (TDCPMVAEMVGIKFFTNEFVAYQQLSQYKKKRLSGMEEWIDGQKQWISVRAEVIT). Residues 530 to 553 (TFSLCGFANLSSIGITLGGLTSMV) traverse the membrane as a helical segment. Residues 554–564 (PHRKSDLSKVV) are Cytoplasmic-facing. A helical transmembrane segment spans residues 565–587 (IRALFTGSCVSFISACVAGILYV). Topologically, residues 588–658 (PRGAETDCVS…CGFYNNTVCA (71 aa)) are extracellular. N-linked (GlcNAc...) asparagine glycosylation occurs at N653.

The protein belongs to the concentrative nucleoside transporter (CNT) (TC 2.A.41) family. Post-translationally, N-glycosylated. N-glycosylation is required for localization to the plasma membrane and the transporter activity.

It is found in the cell membrane. The protein localises to the apical cell membrane. It catalyses the reaction uridine(out) + Na(+)(out) = uridine(in) + Na(+)(in). The catalysed reaction is thymidine(out) + Na(+)(out) = thymidine(in) + Na(+)(in). It carries out the reaction cytidine(out) + Na(+)(out) = cytidine(in) + Na(+)(in). The enzyme catalyses adenosine(out) + Na(+)(out) = adenosine(in) + Na(+)(in). With respect to regulation, due to its high apparent affinity but slow transport, adenosine could act as a negative regulator of pyrimidine transport under some conditions. Functionally, sodium and pyrimidine nucleoside symporter of the plasma membrane that imports uridine, thymidine and cytidine into cells by coupling their transport to the transmembrane sodium electrochemical gradient. Also transports adenosine, an atypical substrate transported with high apparent affinity, but low maximum velocity. Therefore, exhibits the transport characteristics of the nucleoside transport system cit or N2 subtype (N2/cit). Involved in renal nucleoside (re)absorption. This is Sodium/nucleoside cotransporter 1 (SLC28A1) from Oryctolagus cuniculus (Rabbit).